Consider the following 196-residue polypeptide: Calcineurin B homologous protein 2 (196 aa).

A lipid anchor (N-myristoyl glycine) is attached at glycine 2. EF-hand domains are found at residues 26-61, 71-106, 111-146, and 152-187; these read ASLLRLHHRFRALDRNKKGYLSRMDLQQIGALAVNP, FPDGSQRVDFPGFVRVLAHFRPVEDEDTETQDPKKP, SRRNKLHYAFQLYDLDRDGKISRHEMLQVLRLMVGV, and QLENIADRTVQEADEDGDGAVSFVEFTKSLEKMDVE. Serine 27 bears the Phosphoserine mark. Ca(2+)-binding residues include aspartate 124, aspartate 126, aspartate 128, lysine 130, and glutamate 135. The Nuclear export signal motif lies at 137-148; sequence LQVLRLMVGVQV. The Ca(2+) site is built by aspartate 165, aspartate 167, aspartate 169, and glutamate 176.

The protein belongs to the calcineurin regulatory subunit family. CHP subfamily. Interacts with PPP3CA. Interacts with SLC9A1/NHE1; the interaction occurs in a calcium-dependent manner. In terms of tissue distribution, expressed in malignantly transformed cells but not detected in normal tissues.

It localises to the nucleus. Its subcellular location is the cytoplasm. The protein resides in the cell membrane. Its function is as follows. Functions as an integral cofactor in cell pH regulation by controlling plasma membrane-type Na(+)/H(+) exchange activity. Binds to and activates SLC9A1/NHE1 in a serum-independent manner, thus increasing pH and protecting cells from serum deprivation-induced death. Also plays a role in the regulation of cell proliferation and tumor growth by increasing the phosphatase activity of PPP3CA in a calcium-dependent manner. Activator of the calcineurin/NFAT signaling pathway. Involved in the cytoplasmic translocation of the transcription factor NFATC3 to the nucleus. The protein is Calcineurin B homologous protein 2 (CHP2) of Homo sapiens (Human).